A 183-amino-acid polypeptide reads, in one-letter code: Apo-citrate lyase phosphoribosyl-dephospho-CoA transferase (183 aa).

This sequence belongs to the CitX family.

It carries out the reaction apo-[citrate lyase ACP] + 2'-(5''-triphospho-alpha-D-ribosyl)-3'-dephospho-CoA = holo-[citrate lyase ACP] + diphosphate. Its function is as follows. Transfers 2-(5''-triphosphoribosyl)-3'-dephosphocoenzyme-A on a serine residue to the apo-acyl carrier protein (gamma chain) of the citrate lyase to yield holo-acyl carrier protein. The polypeptide is Apo-citrate lyase phosphoribosyl-dephospho-CoA transferase (Escherichia coli O6:K15:H31 (strain 536 / UPEC)).